A 718-amino-acid chain; its full sequence is Catalase-peroxidase (718 aa).

Positions W92–Y220 form a cross-link, tryptophyl-tyrosyl-methioninium (Trp-Tyr) (with M-246). The active-site Proton acceptor is H93. A cross-link (tryptophyl-tyrosyl-methioninium (Tyr-Met) (with W-92)) is located at residues Y220 to M246. A heme b-binding site is contributed by H261.

This sequence belongs to the peroxidase family. Peroxidase/catalase subfamily. Homodimer or homotetramer. The cofactor is heme b. In terms of processing, formation of the three residue Trp-Tyr-Met cross-link is important for the catalase, but not the peroxidase activity of the enzyme.

The enzyme catalyses H2O2 + AH2 = A + 2 H2O. The catalysed reaction is 2 H2O2 = O2 + 2 H2O. Its function is as follows. Bifunctional enzyme with both catalase and broad-spectrum peroxidase activity. This is Catalase-peroxidase from Shewanella halifaxensis (strain HAW-EB4).